Consider the following 380-residue polypeptide: Cytochrome b (380 aa).

A run of 4 helical transmembrane segments spans residues 33–53, 77–98, 113–133, and 178–198; these read FGSL…FLAM, WLIR…YLHV, WNIG…GYVL, and FFAF…IHLL. The heme b site is built by His-83 and His-97. His-182 and His-196 together coordinate heme b. His-201 is an a ubiquinone binding site. 4 consecutive transmembrane segments (helical) span residues 226–246, 288–308, 320–340, and 347–367; these read YKDL…ALFS, LGGV…PMLH, LSQI…WIGG, and FVLI…IALP.

Belongs to the cytochrome b family. As to quaternary structure, the cytochrome bc1 complex contains 3 respiratory subunits (MT-CYB, CYC1 and UQCRFS1), 2 core proteins (UQCRC1 and UQCRC2) and probably 6 low-molecular weight proteins. Requires heme b as cofactor.

Its subcellular location is the mitochondrion inner membrane. Component of the ubiquinol-cytochrome c reductase complex (complex III or cytochrome b-c1 complex) that is part of the mitochondrial respiratory chain. The b-c1 complex mediates electron transfer from ubiquinol to cytochrome c. Contributes to the generation of a proton gradient across the mitochondrial membrane that is then used for ATP synthesis. The polypeptide is Cytochrome b (mt-cyb) (Acipenser transmontanus (White sturgeon)).